The following is a 255-amino-acid chain: Cysteine protease avirulence protein AvrRpt2 (255 aa).

Residues 1-50 (MKIAPVAINHSPLSREVPSHAAPTQAKQTNLQSEAGDLDARKSSASSPET) form a disordered region. Positions 1-71 (MKIAPVAINH…RHKIEVPAFG (71 aa)) are cleaved as a propeptide — removed in mature form. Positions 70–71 (FG) are determinants of cleavage specificity. Positions 76 to 100 (KKSSKHETGGSSANADSSSVASDST) are disordered. Positions 86–98 (SSANADSSSVASD) are enriched in low complexity. The active-site Nucleophile is cysteine 122. Catalysis depends on residues histidine 208 and aspartate 226.

Belongs to the peptidase C70 family. As to quaternary structure, interacts physically with plant cell ROC1 (Arabidopsis single-domain cyclophilin) and RIN4. Post-translationally, autocleaved inside plant cells upon activation by cyclophilin. Cleavage is crucial in subcellular location and in eliciting HR. Inhibited by cyclosporin A (cyclophilin inhibitor).

It localises to the secreted. The protein resides in the host cell membrane. Its function is as follows. Effector protein involved in gene-for-gene resistance in plants expressing RPS2. Its thiol protease activity is required for the degradation of plant cell RIN4 and consequent activation of RPS2 during bacterial infection. The activation of RPS2 is sufficient for the induction of hypersensitive response (HR) and plant resistance. Cleavage of RIN4 by AvrRpt2 also interferes with RPM1-mediated resistance activated by either AvrRpm1 or AvrB. Contributes to virulence in plants lacking the resistance protein RPS2 promoting pathogen growth and disease symptoms. Inhibits PAMP (pathogen-associated molecular patterns)-induced signaling compromising the host's basal defense system. Blocks plant callose deposition, flg22 (a peptide corresponding to the most conserved domain of flagellin) induced accumulation of PR-1, PR-2 and PR-5 and activation of GST6 transcription. The mechanism of virulence is unknown, but this activity is independent of ethylene and salicylic acid response pathways and independent of RIN4 disappearance. This chain is Cysteine protease avirulence protein AvrRpt2 (avrRpt2), found in Pseudomonas syringae pv. tomato.